The following is a 152-amino-acid chain: Protein SprT-like (152 aa).

Positions 13–148 (NYVKKVSIED…FACGYCHGRL (136 aa)) constitute a SprT-like domain. His-72 is a binding site for Zn(2+). Residue Glu-73 is part of the active site. His-76 is a binding site for Zn(2+).

Belongs to the SprT family. The cofactor is Zn(2+).

It localises to the cytoplasm. This chain is Protein SprT-like, found in Streptococcus agalactiae serotype III (strain NEM316).